We begin with the raw amino-acid sequence, 319 residues long: MSLNFLEFEQPIAELEAKIEALRDVSRRDESASVDLDKEIEQLEKKSLELTKKIFSNLGAWQVAQLARHPERPYVFDYIEHIFTEFDALAGDRAFADDKALVGGIARLDGRPVMVIGHQKGRGTKEKVFRNFGMPKPEGYRKALRLMKMAERFKMPIITFIDTAGAYPGVGAEERGQSEAIATNLKAMAGLTVPVICNVVGEGGSGGALAIGVGDYVNMLQYSTYSVISPEGCASILWRDSNKAPQAAEAMGLTAGRLKELELIDSIIEEPLGGAHRDLEAISASLKATLVANLAELEALDTDELLERRYQRLMSYGYC.

The 262-residue stretch at 35–296 (DLDKEIEQLE…KATLVANLAE (262 aa)) folds into the CoA carboxyltransferase C-terminal domain.

Belongs to the AccA family. Acetyl-CoA carboxylase is a heterohexamer composed of biotin carboxyl carrier protein (AccB), biotin carboxylase (AccC) and two subunits each of ACCase subunit alpha (AccA) and ACCase subunit beta (AccD).

The protein localises to the cytoplasm. It catalyses the reaction N(6)-carboxybiotinyl-L-lysyl-[protein] + acetyl-CoA = N(6)-biotinyl-L-lysyl-[protein] + malonyl-CoA. The protein operates within lipid metabolism; malonyl-CoA biosynthesis; malonyl-CoA from acetyl-CoA: step 1/1. Its function is as follows. Component of the acetyl coenzyme A carboxylase (ACC) complex. First, biotin carboxylase catalyzes the carboxylation of biotin on its carrier protein (BCCP) and then the CO(2) group is transferred by the carboxyltransferase to acetyl-CoA to form malonyl-CoA. In Photobacterium profundum (strain SS9), this protein is Acetyl-coenzyme A carboxylase carboxyl transferase subunit alpha.